The following is a 263-amino-acid chain: Endonuclease 8 (263 aa).

The active-site Schiff-base intermediate with DNA is P2. E3 acts as the Proton donor in catalysis. K53 acts as the Proton donor; for beta-elimination activity in catalysis. DNA-binding residues include Q70, R125, and N169. The FPG-type zinc-finger motif lies at 229 to 263 (KVFHREGKACERCGGVIERSTLSSRPFYGCPVCQK). The active-site Proton donor; for delta-elimination activity is R253.

This sequence belongs to the FPG family. Requires Zn(2+) as cofactor.

It catalyses the reaction 2'-deoxyribonucleotide-(2'-deoxyribose 5'-phosphate)-2'-deoxyribonucleotide-DNA = a 3'-end 2'-deoxyribonucleotide-(2,3-dehydro-2,3-deoxyribose 5'-phosphate)-DNA + a 5'-end 5'-phospho-2'-deoxyribonucleoside-DNA + H(+). Involved in base excision repair of DNA damaged by oxidation or by mutagenic agents. Acts as a DNA glycosylase that recognizes and removes damaged bases. Has a preference for oxidized pyrimidines, such as thymine glycol, 5,6-dihydrouracil and 5,6-dihydrothymine. Has AP (apurinic/apyrimidinic) lyase activity and introduces nicks in the DNA strand. Cleaves the DNA backbone by beta-delta elimination to generate a single-strand break at the site of the removed base with both 3'- and 5'-phosphates. This Enterobacter sp. (strain 638) protein is Endonuclease 8.